We begin with the raw amino-acid sequence, 320 residues long: Cytochrome f (320 aa).

A signal peptide spans 1–35 (MQTRNAFSWLKKQITRSISVSLMIYILTRTSISSA). 4 residues coordinate heme: Tyr36, Cys56, Cys59, and His60. The chain crosses the membrane as a helical span at residues 286–306 (VQGLLFFLASVILAQIFLVLK).

This sequence belongs to the cytochrome f family. In terms of assembly, the 4 large subunits of the cytochrome b6-f complex are cytochrome b6, subunit IV (17 kDa polypeptide, petD), cytochrome f and the Rieske protein, while the 4 small subunits are PetG, PetL, PetM and PetN. The complex functions as a dimer. Heme is required as a cofactor.

It is found in the plastid. The protein resides in the chloroplast thylakoid membrane. Its function is as follows. Component of the cytochrome b6-f complex, which mediates electron transfer between photosystem II (PSII) and photosystem I (PSI), cyclic electron flow around PSI, and state transitions. This Nicotiana sylvestris (Wood tobacco) protein is Cytochrome f.